Here is a 461-residue protein sequence, read N- to C-terminus: MKSKNSMSVLCLVDGEHYFPVTKSAVDKIESKGYDVKLLLFIGGTEKLRDTNVDIISEMFNKPVLFGQDHSKVPYDLIEESIKEYDVGMVVDLSDEPVVNYSIRFNIATIALLNGCMYKGSDFEFKALEEEDVLNNPSYKIIGTGKRIGKTAVSAYTARLINKDSDFVPCVVAMGRGGPQIPEIVRGDKIHLTPKYLMEKSDKGFHAASDHWEDALMSRVLTVGCRRCAGGMAGMVYETNMVEGAMMTNDLDVNLVALEGSGSAIPPVKADKQIVLVGGHQPMETLTEYFGPYRIKLADLIIITMCDEQICSREKLDDLLIKIHEINPNADIVPTIFRPHPVDDISNKNILFATTAPESVQHLLKDYLEENFNCNVVAISSHLSNRPLLQRDIEENIDNIDCMLTELKAAAVDVATKDALNKGLEVVYCDNIPIAINDEYDLDKSIMNIVYEAKESFNKKD.

The protein belongs to the cyclic 2,3-diphosphoglycerate synthetase family.

The protein resides in the cytoplasm. It catalyses the reaction (2R)-2,3-bisphosphoglycerate + ATP + H(+) = cyclic (2R)-2,3-bisphosphoglycerate + ADP + phosphate. Functionally, catalyzes the formation of cyclic 2,3-diphosphoglycerate (cDPG) by formation of an intramolecular phosphoanhydride bond at the expense of ATP. This chain is Cyclic 2,3-diphosphoglycerate synthetase, found in Methanosphaera stadtmanae (strain ATCC 43021 / DSM 3091 / JCM 11832 / MCB-3).